An 875-amino-acid chain; its full sequence is Neurotrypsin (875 aa).

Positions 1-20 (MTLARFALALLFGVLPEVVG) are cleaved as a signal peptide. The N-linked (GlcNAc...) asparagine glycan is linked to Asn-26. The segment at 51-72 (QRHRRTRPPPPLPRFPRPPRAL) is disordered. Over residues 58 to 71 (PPPPLPRFPRPPRA) the composition is skewed to pro residues. One can recognise a Kringle domain in the interval 93-165 (CPAGEPWVSV…GKVDWGYCDC (73 aa)). 20 cysteine pairs are disulfide-bonded: Cys-93/Cys-165, Cys-109/Cys-149, Cys-138/Cys-163, Cys-195/Cys-259, Cys-208/Cys-269, Cys-239/Cys-249, Cys-305/Cys-369, Cys-318/Cys-379, Cys-349/Cys-359, Cys-412/Cys-475, Cys-425/Cys-485, Cys-455/Cys-465, Cys-525/Cys-589, Cys-538/Cys-599, Cys-569/Cys-579, Cys-619/Cys-750, Cys-661/Cys-677, Cys-765/Cys-831, Cys-794/Cys-808, and Cys-821/Cys-850. 4 SRCR domains span residues 170 to 271 (VRLR…MCSF), 280 to 381 (IRLV…SCTP), 387 to 487 (IRLA…ACYP), and 500 to 601 (VRLM…ICDY). Positions 619 to 630 (CGLRLLHRRQKR) are zymogen activation region. In terms of domain architecture, Peptidase S1 spans 631-874 (IIGGKNSLRG…FVPWIKSVTK (244 aa)). The active-site Charge relay system is the His-676. A glycan (N-linked (GlcNAc...) asparagine) is linked at Asn-683. Asp-726 serves as the catalytic Charge relay system. The active-site Charge relay system is Ser-825.

It belongs to the peptidase S1 family.

The protein localises to the secreted. Functionally, plays a role in neuronal plasticity and the proteolytic action may subserve structural reorganizations associated with learning and memory operations. The sequence is that of Neurotrypsin (PRSS12) from Saguinus labiatus (Red-chested mustached tamarin).